Consider the following 231-residue polypeptide: Venom allergen 3 homolog (231 aa).

The signal sequence occupies residues 1–21 (MSSCMLFFTVIIAGVFMGTIA). 3 cysteine pairs are disulfide-bonded: Cys-25/Cys-40, Cys-30/Cys-124, and Cys-51/Cys-117. Residues 68-215 (VTLHNQLRRK…WNQQYLVCNY (148 aa)) enclose the SCP domain. An N-linked (GlcNAc...) asparagine glycan is attached at Asn-145. A disulfide bridge connects residues Cys-196 and Cys-213.

This sequence belongs to the CRISP family. Expressed by the venom gland.

Its subcellular location is the secreted. This is Venom allergen 3 homolog from Dinoponera quadriceps (South American ant).